A 441-amino-acid chain; its full sequence is Ubiquitin carboxyl-terminal hydrolase MINDY-3 (441 aa).

C51 (nucleophile) is an active-site residue. Residue H284 is the Proton acceptor of the active site.

Belongs to the MINDY deubiquitinase family. FAM188 subfamily.

The protein localises to the nucleus. It catalyses the reaction Thiol-dependent hydrolysis of ester, thioester, amide, peptide and isopeptide bonds formed by the C-terminal Gly of ubiquitin (a 76-residue protein attached to proteins as an intracellular targeting signal).. Its function is as follows. Hydrolase that can remove 'Lys-48'-linked conjugated ubiquitin from proteins. This Xenopus tropicalis (Western clawed frog) protein is Ubiquitin carboxyl-terminal hydrolase MINDY-3 (mindy3).